The chain runs to 339 residues: Heat-inducible transcription repressor HrcA (339 aa).

This sequence belongs to the HrcA family.

Negative regulator of class I heat shock genes (grpE-dnaK-dnaJ and groELS operons). Prevents heat-shock induction of these operons. The chain is Heat-inducible transcription repressor HrcA from Nitrosospira multiformis (strain ATCC 25196 / NCIMB 11849 / C 71).